The primary structure comprises 133 residues: Ribosomal RNA large subunit methyltransferase H 1 (133 aa).

S-adenosyl-L-methionine-binding positions include I55, G89, and 101–106 (ISPMEM).

Belongs to the RNA methyltransferase RlmH family. As to quaternary structure, homodimer.

The protein localises to the cytoplasm. It catalyses the reaction pseudouridine(1915) in 23S rRNA + S-adenosyl-L-methionine = N(3)-methylpseudouridine(1915) in 23S rRNA + S-adenosyl-L-homocysteine + H(+). In terms of biological role, specifically methylates the pseudouridine at position 1915 (m3Psi1915) in 23S rRNA. The sequence is that of Ribosomal RNA large subunit methyltransferase H 1 from Thermoanaerobacter sp. (strain X514).